The primary structure comprises 224 residues: Octanoyl-[acyl-carrier-protein]:protein N-octanoyltransferase LIPT2, mitochondrial (224 aa).

Residues S37–L217 enclose the BPL/LPL catalytic domain. Residues R81–H88, A147–G149, and G160–A162 contribute to the substrate site. Residue C178 is the Acyl-thioester intermediate of the active site.

Belongs to the LipB family.

It localises to the mitochondrion. It catalyses the reaction octanoyl-[ACP] + L-lysyl-[protein] = N(6)-octanoyl-L-lysyl-[protein] + holo-[ACP] + H(+). The protein operates within protein modification; protein lipoylation via endogenous pathway; protein N(6)-(lipoyl)lysine from octanoyl-[acyl-carrier-protein]: step 1/2. Catalyzes the transfer of endogenously produced octanoic acid from octanoyl-acyl-carrier-protein (octanoyl-ACP) onto the lipoyl domains of lipoate-dependent enzymes such as the protein H of the glycine cleavage system (GCSH). Lipoyl-ACP can also act as a substrate although octanoyl-ACP is likely to be the physiological substrate. In Danio rerio (Zebrafish), this protein is Octanoyl-[acyl-carrier-protein]:protein N-octanoyltransferase LIPT2, mitochondrial (lipt2).